A 233-amino-acid polypeptide reads, in one-letter code: Protein lin-7 homolog A (233 aa).

The Kinase interacting site signature appears at 14-28 (MATLTVVQPLTLDRD). Residues 25–80 (LDRDVARAIELLEKLQESGEVPVHKLQSLKKVLQSEFCTAIREVYQYMHETITVNG) enclose the L27 domain. Residues 108–190 (VVELPKTDEG…SVKLVVRYTP (83 aa)) form the PDZ domain. The interval 214–233 (LLIQQQQQQQQQQPQQNHMS) is disordered.

This sequence belongs to the lin-7 family. Forms a complex with CASK and CASKIN1. Component of the brain-specific heterotrimeric complex (LIN-10-LIN-2-LIN-7 complex) composed of at least APBA1, CASK, and LIN7, which associates with the motor protein KIF17 to transport vesicles along microtubules. Can also interact with other modular proteins containing protein-protein interaction domains like PALS1, PALS2, MPP7, DLG1, DLG2 and DLG3 through its L27 domain. Interacts with DLG4, GRIN2B and MARCHF11 as well as CDH1 and CTNNB1, the channels KCNJ12/Kir2.2, KCNJ4/Kir2.3 and probably KCNJ2/Kir2.1 and SLC6A12/BGT-1 via its PDZ domain. The association of LIN7A with cadherin and beta-catenin is calcium-dependent, occurs at synaptic junctions and requires the actin cytoskeleton. Interacts with EGFR, ERBB2, ERBB3 and ERBB4 with both PDZ and KID domains. Associates with KIF17 via APBA1. Interacts with HTR4. Forms a tripartite complex composed of DLG1, MPP7 and LIN7 (LIN7A or LIN7C). As to expression, expressed in the kidney, along the length of the nephron.

Its subcellular location is the cell membrane. The protein resides in the basolateral cell membrane. It is found in the cell junction. It localises to the postsynaptic density membrane. The protein localises to the tight junction. Functionally, plays a role in establishing and maintaining the asymmetric distribution of channels and receptors at the plasma membrane of polarized cells. Forms membrane-associated multiprotein complexes that may regulate delivery and recycling of proteins to the correct membrane domains. The tripartite complex composed of LIN7 (LIN7A, LIN7B or LIN7C), CASK and APBA1 associates with the motor protein KIF17 to transport vesicles containing N-methyl-D-aspartate (NMDA) receptor subunit NR2B along microtubules. This complex may have the potential to couple synaptic vesicle exocytosis to cell adhesion in brain. Ensures the proper localization of GRIN2B (subunit 2B of the NMDA receptor) to neuronal postsynaptic density and may function in localizing synaptic vesicles at synapses where it is recruited by beta-catenin and cadherin. Required to localize Kir2 channels, GABA transporter (SLC6A12) and EGFR/ERBB1, ERBB2, ERBB3 and ERBB4 to the basolateral membrane of epithelial cells. The protein is Protein lin-7 homolog A (Lin7a) of Mus musculus (Mouse).